Consider the following 146-residue polypeptide: Large ribosomal subunit protein uL15 (146 aa).

Basic and acidic residues predominate over residues 1–10; sequence MTIKLHDLKP. Residues 1–52 are disordered; that stretch reads MTIKLHDLKPARGSKTPRTRVGRGEGSKGKTAGRGTKGTKARKNVPVTFEGG.

It belongs to the universal ribosomal protein uL15 family. As to quaternary structure, part of the 50S ribosomal subunit.

Binds to the 23S rRNA. In Mycolicibacterium paratuberculosis (strain ATCC BAA-968 / K-10) (Mycobacterium paratuberculosis), this protein is Large ribosomal subunit protein uL15.